Consider the following 627-residue polypeptide: Neutral endopeptidase (627 aa).

Residues 1 to 627 (MTRIQDDLFA…RAPENRLKIW (627 aa)) form the Peptidase M13 domain. A Zn(2+)-binding site is contributed by H475. The active site involves E476. The Zn(2+) site is built by H479 and E535. The active-site Proton donor is D539.

The protein belongs to the peptidase M13 family. In terms of assembly, monomer. The cofactor is Zn(2+).

Endopeptidase with broad substrate specificity for several oligopeptides. The chain is Neutral endopeptidase (pepO) from Lactococcus lactis subsp. lactis (strain IL1403) (Streptococcus lactis).